A 549-amino-acid chain; its full sequence is Polycomb group RING finger protein 3 homolog mig-32 (549 aa).

The tract at residues Met-1–Gln-263 is disordered. The span at Val-12 to Ser-29 shows a compositional bias: low complexity. Acidic residues-rich tracts occupy residues Pro-38 to Asp-49 and Met-87 to Val-100. The segment covering Lys-118–Lys-130 has biased composition (basic residues). Positions Pro-134–Ser-144 are enriched in pro residues. Low complexity predominate over residues Pro-145–Ser-156. The segment covering Glu-205 to Leu-235 has biased composition (basic and acidic residues). Residues Glu-206–Lys-260 adopt a coiled-coil conformation. Residues Ala-236–Arg-247 show a composition bias toward basic residues. The segment covering Arg-248–Arg-258 has biased composition (basic and acidic residues). The RING-type zinc-finger motif lies at Cys-329–Cys-368.

As to quaternary structure, component of a PRC1-like complex.

It is found in the nucleus. The protein localises to the nucleolus. Functionally, component of a Polycomb group (PcG) multiprotein PRC1-like complex, a complex class required to maintain the transcriptionally repressive state of many genes, throughout development. Required for ubiquitination of histone H2A. Plays a role in the formation of the male-specific genital sensilla (simple sense organs) known as rays. Required for normal migration of the hermaphrodite specific neurons (HSN) and for extension of some neuronal processes. Represses vulval fates in hypodermal cells that do not normally contribute to vulval development. The sequence is that of Polycomb group RING finger protein 3 homolog mig-32 from Caenorhabditis elegans.